Consider the following 332-residue polypeptide: MSVLTLDFTKFHSGSEVERRAFGQALLDGFTTTGFVKLINHGFSKEEMADIFNWNQRFFDLPIDRKAAIRNDEGPKPQRGWSSLGAEKTGFLNPGGKLSLARASNNDRQDAKEHFDIGPAEDEEFQNKWPEEQTLPGFQETMNSYFDRSQAITLELLEALALAMDVPKDTFVGLCHGHASELRLNHYPSIPVKTIEEGKTNRIWPHTDFGIITLLAQDDIGGLEIQDRNHPSDFLPVNREDSTEFVVNIGDILERWTNGRLRAGLHQVTTPRSMQQKGNGTLPTRRSVAFFLKPHRQMSVASISHFVPGNQSPRYEDMTALAYQQLRTGIVY.

The Fe2OG dioxygenase domain occupies 178 to 294 (HASELRLNHY…RRSVAFFLKP (117 aa)). 3 residues coordinate Fe cation: His206, Asp208, and His266. Arg285 is a binding site for 2-oxoglutarate.

Belongs to the iron/ascorbate-dependent oxidoreductase family. Requires Fe(2+) as cofactor.

It participates in antifungal biosynthesis. In terms of biological role, 2-oxoglutarate-dependent dioxygenase; part of the gene cluster that mediates the biosynthesis of echinocandin B, a fungal lipidated cyclic hexapeptide that acts as an antifungal agent. Linoleoyl-AMP, produced by the fatty-acyl-AMP ligase ecdI, is transferred to the initiation carrier domain (T0) of ecdA. The linoleoyl-S-phosphopantetheinyl-T0 is sequentially extended with L-ornithine, L-threonine, L-proline, L-homotyrosine, L-threonine, and 4R-methyl-L-proline to form the linear hexapeptide. Thereafter, the terminal condensation (C7) performs macrocyclization of the NRPS product and the cyclic scaffold is released from ecdA. All six of the amino acid residues are hydroxylated, including 4R,5R-dihydroxy-L-ornithine, 4R-hydroxyl-L-proline, 3S,4S-dihydroxy-L-homotyrosine, and 3S-hydroxyl-4S-methyl-L-prolin. In the pathway, all the hydroxylation reactions are proposed to occur following completion of the cyclic peptide, so the unhydroxylated precursor produced by ecdA will undergo six rounds of hydroxylation. Five hydroxylase genes (ecdG, ecdH, ecdK, htyE and htyF) are embedded within the echinocandin B (ecd) and L-homotyrosine (hty) clusters. This is 2-oxoglutarate-dependent dioxygenase ecdK from Aspergillus rugulosus (Emericella rugulosa).